The chain runs to 290 residues: MSWLDKLLPPKIQQTDPSTRKGIPEGLWVKCPSCESTLYRTDVEANLHVCPKCDHHMRISARARLDALLDAEGRYEIGQEIVPVDALKFKDSKKYPDRIKAAMEDTGETDAMVVMGGAIHTIPVVASCFEFEFMGGSMGSVVGERFVRGAQAALEQKVPFICFTATGGARMQESLLSLLQMAKTTAMLNQLSASKLPFISVLTDPTMGGVSASFAFLGDVVIAEPKALIGFAGPRVIEQTVREKLPEGFQRSEFLLQKGAIDMIVDRRKMRAELAQLLALLQKQPADAVA.

A CoA carboxyltransferase N-terminal domain is found at 27–290 (LWVKCPSCES…LQKQPADAVA (264 aa)). The Zn(2+) site is built by cysteine 31, cysteine 34, cysteine 50, and cysteine 53. Residues 31–53 (CPSCESTLYRTDVEANLHVCPKC) form a C4-type zinc finger.

Belongs to the AccD/PCCB family. Acetyl-CoA carboxylase is a heterohexamer composed of biotin carboxyl carrier protein (AccB), biotin carboxylase (AccC) and two subunits each of ACCase subunit alpha (AccA) and ACCase subunit beta (AccD). Zn(2+) is required as a cofactor.

The protein resides in the cytoplasm. It catalyses the reaction N(6)-carboxybiotinyl-L-lysyl-[protein] + acetyl-CoA = N(6)-biotinyl-L-lysyl-[protein] + malonyl-CoA. It participates in lipid metabolism; malonyl-CoA biosynthesis; malonyl-CoA from acetyl-CoA: step 1/1. In terms of biological role, component of the acetyl coenzyme A carboxylase (ACC) complex. Biotin carboxylase (BC) catalyzes the carboxylation of biotin on its carrier protein (BCCP) and then the CO(2) group is transferred by the transcarboxylase to acetyl-CoA to form malonyl-CoA. The polypeptide is Acetyl-coenzyme A carboxylase carboxyl transferase subunit beta (Cupriavidus taiwanensis (strain DSM 17343 / BCRC 17206 / CCUG 44338 / CIP 107171 / LMG 19424 / R1) (Ralstonia taiwanensis (strain LMG 19424))).